Here is a 309-residue protein sequence, read N- to C-terminus: Protoheme IX farnesyltransferase (309 aa).

Transmembrane regions (helical) follow at residues 30-49 (VMSLVVFTALVGILVAPGGV), 53-75 (IGFTAILFIALGAGASGALNMWY), 98-118 (AGEALTLGLWLSAISVAMLGL), 123-143 (VAAGLLAFTIFFYAVVYSMWL), 151-171 (IVIGGAAGSFPPMIGWAAVTG), 178-198 (VLMFGIIFMWTPPHFWALALF), 224-244 (ILIYTILLVPVALGLVLTEVA), 247-267 (VYLITALVCNAIFLKGAYDIW), and 285-305 (VFKFSLLYLFLHFGALLLDAI).

It belongs to the UbiA prenyltransferase family. Protoheme IX farnesyltransferase subfamily. In terms of assembly, interacts with CtaA.

It is found in the cell inner membrane. It catalyses the reaction heme b + (2E,6E)-farnesyl diphosphate + H2O = Fe(II)-heme o + diphosphate. The protein operates within porphyrin-containing compound metabolism; heme O biosynthesis; heme O from protoheme: step 1/1. Its function is as follows. Converts heme B (protoheme IX) to heme O by substitution of the vinyl group on carbon 2 of heme B porphyrin ring with a hydroxyethyl farnesyl side group. This chain is Protoheme IX farnesyltransferase, found in Jannaschia sp. (strain CCS1).